The chain runs to 56 residues: Protein hunchback (56 aa).

C2H2-type zinc fingers lie at residues 1–5 (HLRNH), 11–33 (FKCD…LKSH), and 39–56 (FRCS…SLKL).

This sequence belongs to the hunchback C2H2-type zinc-finger protein family.

The protein resides in the nucleus. Gap class segmentation protein that controls development of head structures. The chain is Protein hunchback (hb) from Euscelis plebejus (Leafhopper).